The following is a 119-amino-acid chain: U9-hexatoxin-Hi1 (119 aa).

The N-terminal stretch at 1-17 is a signal peptide; it reads MKLYLVILVTSVALAAA. Residues 18 to 53 constitute a propeptide that is removed on maturation; sequence SPTRTKEEPIEDELLEALLSVEKSLFNEETTVMEKR. 4 disulfides stabilise this stretch: Cys55-Cys73, Cys66-Cys79, Cys70-Cys117, and Cys72-Cys88.

The protein belongs to the neurotoxin 03 (Tx2) family. 03 subfamily. Expressed by the venom gland.

Its subcellular location is the secreted. In terms of biological role, probable ion channel inhibitor. In Hadronyche infensa (Fraser island funnel-web spider), this protein is U9-hexatoxin-Hi1.